A 202-amino-acid chain; its full sequence is NADH-quinone oxidoreductase subunit C (202 aa).

This sequence belongs to the complex I 30 kDa subunit family. As to quaternary structure, NDH-1 is composed of 14 different subunits. Subunits NuoB, C, D, E, F, and G constitute the peripheral sector of the complex.

It localises to the cell inner membrane. It catalyses the reaction a quinone + NADH + 5 H(+)(in) = a quinol + NAD(+) + 4 H(+)(out). NDH-1 shuttles electrons from NADH, via FMN and iron-sulfur (Fe-S) centers, to quinones in the respiratory chain. The immediate electron acceptor for the enzyme in this species is believed to be ubiquinone. Couples the redox reaction to proton translocation (for every two electrons transferred, four hydrogen ions are translocated across the cytoplasmic membrane), and thus conserves the redox energy in a proton gradient. The protein is NADH-quinone oxidoreductase subunit C of Bartonella henselae (strain ATCC 49882 / DSM 28221 / CCUG 30454 / Houston 1) (Rochalimaea henselae).